Reading from the N-terminus, the 452-residue chain is Pup--protein ligase (452 aa).

Glu-9 is a Mg(2+) binding site. Residue Arg-53 participates in ATP binding. Residue Tyr-55 coordinates Mg(2+). Asp-57 (proton acceptor) is an active-site residue. Glu-63 lines the Mg(2+) pocket. Positions 66 and 419 each coordinate ATP.

Belongs to the Pup ligase/Pup deamidase family. Pup-conjugating enzyme subfamily.

It carries out the reaction ATP + [prokaryotic ubiquitin-like protein]-L-glutamate + [protein]-L-lysine = ADP + phosphate + N(6)-([prokaryotic ubiquitin-like protein]-gamma-L-glutamyl)-[protein]-L-lysine.. The protein operates within protein degradation; proteasomal Pup-dependent pathway. Its pathway is protein modification; protein pupylation. Catalyzes the covalent attachment of the prokaryotic ubiquitin-like protein modifier Pup to the proteasomal substrate proteins, thereby targeting them for proteasomal degradation. This tagging system is termed pupylation. The ligation reaction involves the side-chain carboxylate of the C-terminal glutamate of Pup and the side-chain amino group of a substrate lysine. In Rhodococcus jostii (strain RHA1), this protein is Pup--protein ligase.